Consider the following 1786-residue polypeptide: Laminin subunit beta-1 (1786 aa).

The N-terminal stretch at 1 to 21 (MGLLQVFAFGVLALWGTRVCA) is a signal peptide. Positions 31 to 270 (AEGSCYPATG…AVYDMVVRGN (240 aa)) constitute a Laminin N-terminal domain. An N-linked (GlcNAc...) asparagine glycan is attached at asparagine 120. Serine 250 is subject to Phosphoserine. 19 cysteine pairs are disulfide-bonded: cysteine 271–cysteine 280, cysteine 273–cysteine 298, cysteine 300–cysteine 309, cysteine 312–cysteine 332, cysteine 335–cysteine 344, cysteine 337–cysteine 362, cysteine 365–cysteine 374, cysteine 377–cysteine 395, cysteine 398–cysteine 411, cysteine 400–cysteine 426, cysteine 428–cysteine 437, cysteine 440–cysteine 455, cysteine 458–cysteine 472, cysteine 460–cysteine 479, cysteine 481–cysteine 490, cysteine 493–cysteine 507, cysteine 510–cysteine 522, cysteine 512–cysteine 529, and cysteine 531–cysteine 540. 4 consecutive Laminin EGF-like domains span residues 271 to 334 (CFCY…ACKK), 335 to 397 (CNCN…LCEP), 398 to 457 (CTCD…GCKS), and 458 to 509 (CACN…GCRP). The N-linked (GlcNAc...) asparagine glycan is linked to asparagine 356. The region spanning 510-540 (CDCDLGGALNNSCSEDSGQCSCLPHMIGRQC) is the Laminin EGF-like 5; truncated domain. Asparagine 519 is a glycosylation site (N-linked (GlcNAc...) asparagine). The region spanning 549–767 (FTTLDHYIYE…IIFSISALIH (219 aa)) is the Laminin IV type B domain. The N-linked (GlcNAc...) asparagine glycan is linked to asparagine 677. Cystine bridges form between cysteine 773-cysteine 785, cysteine 775-cysteine 792, cysteine 794-cysteine 803, cysteine 806-cysteine 818, cysteine 821-cysteine 833, cysteine 823-cysteine 840, cysteine 842-cysteine 851, cysteine 854-cysteine 864, cysteine 867-cysteine 876, cysteine 869-cysteine 883, cysteine 886-cysteine 895, cysteine 898-cysteine 914, cysteine 917-cysteine 933, cysteine 919-cysteine 944, cysteine 946-cysteine 955, cysteine 958-cysteine 973, cysteine 976-cysteine 990, cysteine 978-cysteine 997, cysteine 1000-cysteine 1009, cysteine 1012-cysteine 1025, cysteine 1028-cysteine 1040, cysteine 1030-cysteine 1054, cysteine 1056-cysteine 1065, cysteine 1068-cysteine 1081, cysteine 1084-cysteine 1096, cysteine 1086-cysteine 1103, cysteine 1105-cysteine 1114, cysteine 1117-cysteine 1129, cysteine 1132-cysteine 1144, cysteine 1134-cysteine 1151, cysteine 1153-cysteine 1162, and cysteine 1165-cysteine 1176. Laminin EGF-like domains are found at residues 773 to 820 (CECD…GCKP), 821 to 866 (CDCH…SCQP), 867 to 916 (CQCN…HCRP), 917 to 975 (CPCP…SCQP), 976 to 1027 (CQCH…DCRK), 1028 to 1083 (CVCN…GCGP), 1084 to 1131 (CNCN…ECRA), and 1132 to 1178 (CDCD…DCTP). An N-linked (GlcNAc...) asparagine glycan is attached at asparagine 1041. Positions 1179–1397 (CHQCFALWDA…LDLSAVAQMT (219 aa)) are domain II. N-linked (GlcNAc...) asparagine glycans are attached at residues asparagine 1195, asparagine 1279, asparagine 1336, and asparagine 1343. Residues 1216 to 1315 (YRETVDSVEK…LEFIKNSDIQ (100 aa)) are a coiled coil. Residues 1368–1388 (KEQQEEQARLLDELAGKLQSL) are a coiled coil. Residues 1398–1430 (CGTPPGADCSESECGGPNCRTDEGEKKCGGPGC) are domain alpha. Residues 1431–1786 (GGLVTVAHSA…EKVAVYSTCL (356 aa)) form a domain I region. Positions 1448–1778 (DRDVLSALAE…RSLLKDISEK (331 aa)) form a coiled coil. A glycan (N-linked (GlcNAc...) asparagine) is linked at asparagine 1487. At serine 1496 the chain carries Phosphoserine. Asparagine 1542 and asparagine 1643 each carry an N-linked (GlcNAc...) asparagine glycan. At serine 1666 the chain carries Phosphoserine.

As to quaternary structure, laminin is a complex glycoprotein, consisting of three different polypeptide chains (alpha, beta, gamma), which are bound to each other by disulfide bonds into a cross-shaped molecule comprising one long and three short arms with globules at each end. Beta-1 is a subunit of laminin-1 (laminin-111 or EHS laminin), laminin-2 (laminin-211 or merosin), laminin-6 (laminin-311 or K-laminin), laminin-8 (laminin-411), laminin-10 (laminin-511) and laminin-12 (laminin-213). Interacts with ITGB1. As to expression, widely expressed in the embryo. High levels are detected in the cerebellar basement membrane, at postnatal day 7.

Its subcellular location is the secreted. It localises to the extracellular space. It is found in the extracellular matrix. The protein localises to the basement membrane. Its function is as follows. Binding to cells via a high affinity receptor, laminin is thought to mediate the attachment, migration and organization of cells into tissues during embryonic development by interacting with other extracellular matrix components. Involved in the organization of the laminar architecture of the cerebral cortex. It is probably required for the integrity of the basement membrane/glia limitans that serves as an anchor point for the endfeet of radial glial cells and as a physical barrier to migrating neurons. Radial glial cells play a central role in cerebral cortical development, where they act both as the proliferative unit of the cerebral cortex and a scaffold for neurons migrating toward the pial surface. The protein is Laminin subunit beta-1 (Lamb1) of Mus musculus (Mouse).